A 193-amino-acid polypeptide reads, in one-letter code: Xanthine phosphoribosyltransferase (193 aa).

Positions 20 and 27 each coordinate xanthine. 128 to 132 (ANGQA) serves as a coordination point for 5-phospho-alpha-D-ribose 1-diphosphate. Lys-156 serves as a coordination point for xanthine.

Belongs to the purine/pyrimidine phosphoribosyltransferase family. Xpt subfamily. In terms of assembly, homodimer.

The protein resides in the cytoplasm. The enzyme catalyses XMP + diphosphate = xanthine + 5-phospho-alpha-D-ribose 1-diphosphate. Its pathway is purine metabolism; XMP biosynthesis via salvage pathway; XMP from xanthine: step 1/1. In terms of biological role, converts the preformed base xanthine, a product of nucleic acid breakdown, to xanthosine 5'-monophosphate (XMP), so it can be reused for RNA or DNA synthesis. This Streptococcus pneumoniae (strain P1031) protein is Xanthine phosphoribosyltransferase.